Reading from the N-terminus, the 1278-residue chain is SMC5-SMC6 complex localization factor protein 2 (1278 aa).

Disordered stretches follow at residues 1–235 (MTRR…LGAR), 248–337 (EQKK…KRTE), 443–491 (RINS…FIRH), and 509–582 (EPED…KETK). Residues 39 to 50 (KRTESPGDRKQS) are compositionally biased toward basic and acidic residues. The segment covering 94-103 (SSPKKLKPKR) has biased composition (basic residues). Composition is skewed to basic and acidic residues over residues 118-133 (GGKEHHKDRGVHESRR), 156-174 (LPKEIKAQKKKHQSPERRK), 180-199 (ESNREKNDRDRGKNSEDSRK), and 248-258 (EQKKLRKEQME). Polar residues-rich tracts occupy residues 259–277 (QRINSENSFSEASNLSLKS) and 318–329 (SDSWELSGSKQN). 2 stretches are compositionally biased toward basic and acidic residues: residues 449–463 (KEQRNSVDSDLKSTK) and 469–489 (KARESFLEKRPDTSHQREKFI). Positions 519-540 (ADSAPSNAGHHSSRNSDQVHSA) are enriched in polar residues. Phosphoserine is present on serine 591. Disordered stretches follow at residues 598-724 (PLNA…EEEE), 739-764 (RTPTTSGKPPAVSKGLRSQSSDMKEY), and 798-820 (IRQGRGIKSPLRTGDQDSTDDGD). Over residues 609 to 630 (PKKDKERSSSKERSGHSTESSK) the composition is skewed to basic and acidic residues. Composition is skewed to low complexity over residues 643-654 (SNESSGKNSGGS), 666-675 (PPAALEVVPS), and 688-697 (SGNSNAGSNA). Residues 707–724 (DSDEESLGYTLESDEEEE) show a composition bias toward acidic residues. Phosphoserine is present on residues serine 708, serine 712, and serine 719. The segment at 740–1278 (TPTTSGKPPA…QLHDFWVPDS (539 aa)) is interaction with SIMC1. Residues 769-1271 (TYTNTLERLV…NCRPTQGQLH (503 aa)) form an NSE6-like domain region. A required for interaction with SLF1 and RAD18 region spans residues 807-1278 (PLRTGDQDST…QLHDFWVPDS (472 aa)).

The protein belongs to the FAM178 family. In terms of assembly, forms a heterodimer with SIMC1. Interacts with SLF1 (via N-terminus); this interaction links RAD18 to the SMC5-SMC6 complex. Interacts with RAD18; this interaction is increased in a SLF1-dependent manner. Interacts with SMC5 and SMC6.

It localises to the nucleus. The protein localises to the PML body. Functionally, plays a role in the DNA damage response (DDR) pathway by regulating postreplication repair of UV-damaged DNA and genomic stability maintenance. The SLF1-SLF2 complex acts to link RAD18 with the SMC5-SMC6 complex at replication-coupled interstrand cross-links (ICL) and DNA double-strand breaks (DSBs) sites on chromatin during DNA repair in response to stalled replication forks. Promotes the recruitment of the SMC5-SMC6 complex to DNA lesions. May play a role in SMC5-SMC6 complex recruitment for viral restriction. Forms a complex with SIMC1 and this complex is required to recruit SMC5-SMC6 complex to PML nuclear bodies and sites of viral replication. In Mus musculus (Mouse), this protein is SMC5-SMC6 complex localization factor protein 2.